The following is a 299-amino-acid chain: MKLFLLAAAAFSAPALTVSELNHIKSLNPRWKAGIPKRFEGLTKDEISSLLMPVSFLKRDRAAVPRGTVSATQAPDSFDFREEYPHCIPEVVDQGGCGSCWAFSSVASVGDRRCFAGLDKKAVKYSPQYVVSCDRGDMACDGGWLPSVWRFLTKTGTTTDECVPYQSGSTGARGTCPTKCADGSDLPHLYKATKAVDYGLDAPAIMKALATGGPLQTAFTVYSDFMYYESGVYQHTYGRVEGGHAVDMVGYGTDDDGVDYWIIKNSWGPDWGEDGYFRIIRMTNECGIEEQVIGGFFEN.

An N-terminal signal peptide occupies residues 1–19; sequence MKLFLLAAAAFSAPALTVS. 3 cysteine pairs are disulfide-bonded: Cys87–Cys114, Cys97–Cys140, and Cys133–Cys176. Cys100 is an active-site residue. Active-site residues include His244 and Asn265.

The protein belongs to the peptidase C1 family.

The protein resides in the vacuole. In terms of biological role, thiol protease which is required for parasite excystation and invasion of the proximal small intestine of the human host. In Giardia intestinalis (Giardia lamblia), this protein is Cathepsin B-like CP3 (CP3).